A 225-amino-acid chain; its full sequence is MAGSSEEAPDYGRGVVIMDDWPGYDLNLFTYPQHYYGDLEYVLIPHGIIVDRIERLAKDIMKDIGYSDIMVLCVLKGGYKFCADLVEHLKNISRNSDRFVSMKVDFIRLKSYRNDQSMGEMQIIGGDDLSTLAGKNVLIVEDVVGTGRTMKALLSNIEKYKPNMIKVASLLVKRTSRSDGFRPDYAGFEIPNLFVVGYALDYNEYFRDLNHICVINEHGKEKYRV.

Residue A2 is modified to N-acetylalanine. Residues E141 and D142 each contribute to the Mg(2+) site. GMP-binding positions include E141–T149, K173, F194–V195, and D201. D201 serves as a coordination point for Mg(2+).

The protein belongs to the purine/pyrimidine phosphoribosyltransferase family. As to quaternary structure, homodimer.

Has low, barely detectable phosphoribosyltransferase activity (in vitro). Binds GMP, IMP and alpha-D-5-phosphoribosyl 1-pyrophosphate (PRPP). Is not expected to contribute to purine metabolism or GMP salvage. This Homo sapiens (Human) protein is Phosphoribosyltransferase domain-containing protein 1 (PRTFDC1).